The primary structure comprises 309 residues: Methionyl-tRNA formyltransferase (309 aa).

S109–P112 contacts (6S)-5,6,7,8-tetrahydrofolate.

The protein belongs to the Fmt family.

The catalysed reaction is L-methionyl-tRNA(fMet) + (6R)-10-formyltetrahydrofolate = N-formyl-L-methionyl-tRNA(fMet) + (6S)-5,6,7,8-tetrahydrofolate + H(+). Functionally, attaches a formyl group to the free amino group of methionyl-tRNA(fMet). The formyl group appears to play a dual role in the initiator identity of N-formylmethionyl-tRNA by promoting its recognition by IF2 and preventing the misappropriation of this tRNA by the elongation apparatus. This is Methionyl-tRNA formyltransferase from Clostridium novyi (strain NT).